The following is a 407-amino-acid chain: Probable tRNA sulfurtransferase (407 aa).

Residues 61-165 (NEITYRLSKI…LDAIYMYEEV (105 aa)) enclose the THUMP domain. ATP-binding positions include 183–184 (ML), 208–209 (HF), arginine 265, glycine 287, and glutamine 296.

Belongs to the ThiI family.

Its subcellular location is the cytoplasm. The catalysed reaction is [ThiI sulfur-carrier protein]-S-sulfanyl-L-cysteine + a uridine in tRNA + 2 reduced [2Fe-2S]-[ferredoxin] + ATP + H(+) = [ThiI sulfur-carrier protein]-L-cysteine + a 4-thiouridine in tRNA + 2 oxidized [2Fe-2S]-[ferredoxin] + AMP + diphosphate. It catalyses the reaction [ThiS sulfur-carrier protein]-C-terminal Gly-Gly-AMP + S-sulfanyl-L-cysteinyl-[cysteine desulfurase] + AH2 = [ThiS sulfur-carrier protein]-C-terminal-Gly-aminoethanethioate + L-cysteinyl-[cysteine desulfurase] + A + AMP + 2 H(+). The protein operates within cofactor biosynthesis; thiamine diphosphate biosynthesis. In terms of biological role, catalyzes the ATP-dependent transfer of a sulfur to tRNA to produce 4-thiouridine in position 8 of tRNAs, which functions as a near-UV photosensor. Also catalyzes the transfer of sulfur to the sulfur carrier protein ThiS, forming ThiS-thiocarboxylate. This is a step in the synthesis of thiazole, in the thiamine biosynthesis pathway. The sulfur is donated as persulfide by IscS. This chain is Probable tRNA sulfurtransferase, found in Staphylococcus aureus (strain bovine RF122 / ET3-1).